The primary structure comprises 144 residues: Large ribosomal subunit protein uL16 (144 aa).

It belongs to the universal ribosomal protein uL16 family. Part of the 50S ribosomal subunit.

Functionally, binds 23S rRNA and is also seen to make contacts with the A and possibly P site tRNAs. This chain is Large ribosomal subunit protein uL16, found in Latilactobacillus sakei subsp. sakei (strain 23K) (Lactobacillus sakei subsp. sakei).